The primary structure comprises 565 residues: Dihydroxy-acid dehydratase (565 aa).

A Mg(2+)-binding site is contributed by Asp83. Position 124 (Cys124) interacts with [2Fe-2S] cluster. Mg(2+)-binding residues include Asp125 and Lys126. N6-carboxylysine is present on Lys126. Cys197 contacts [2Fe-2S] cluster. Residue Glu451 coordinates Mg(2+). Ser477 (proton acceptor) is an active-site residue.

The protein belongs to the IlvD/Edd family. In terms of assembly, homodimer. The cofactor is [2Fe-2S] cluster. Mg(2+) is required as a cofactor.

The enzyme catalyses (2R)-2,3-dihydroxy-3-methylbutanoate = 3-methyl-2-oxobutanoate + H2O. It catalyses the reaction (2R,3R)-2,3-dihydroxy-3-methylpentanoate = (S)-3-methyl-2-oxopentanoate + H2O. Its pathway is amino-acid biosynthesis; L-isoleucine biosynthesis; L-isoleucine from 2-oxobutanoate: step 3/4. The protein operates within amino-acid biosynthesis; L-valine biosynthesis; L-valine from pyruvate: step 3/4. Its function is as follows. Functions in the biosynthesis of branched-chain amino acids. Catalyzes the dehydration of (2R,3R)-2,3-dihydroxy-3-methylpentanoate (2,3-dihydroxy-3-methylvalerate) into 2-oxo-3-methylpentanoate (2-oxo-3-methylvalerate) and of (2R)-2,3-dihydroxy-3-methylbutanoate (2,3-dihydroxyisovalerate) into 2-oxo-3-methylbutanoate (2-oxoisovalerate), the penultimate precursor to L-isoleucine and L-valine, respectively. The polypeptide is Dihydroxy-acid dehydratase (Symbiobacterium thermophilum (strain DSM 24528 / JCM 14929 / IAM 14863 / T)).